Consider the following 150-residue polypeptide: Viral late gene transcription factor 2 (150 aa).

The protein belongs to the orthopoxvirus VLTF-2/OPG126 family. As to quaternary structure, interacts with itself. Interacts with the late transcription factors VLTF-1/OPG093.

Functionally, acts with RNA polymerase to initiate transcription from late gene promoters. The polypeptide is Viral late gene transcription factor 2 (OPG126) (Vaccinia virus (strain Western Reserve) (VACV)).